The chain runs to 137 residues: Large ribosomal subunit protein uL16 (137 aa).

It belongs to the universal ribosomal protein uL16 family. In terms of assembly, part of the 50S ribosomal subunit.

Binds 23S rRNA and is also seen to make contacts with the A and possibly P site tRNAs. The polypeptide is Large ribosomal subunit protein uL16 (Nitratidesulfovibrio vulgaris (strain ATCC 29579 / DSM 644 / CCUG 34227 / NCIMB 8303 / VKM B-1760 / Hildenborough) (Desulfovibrio vulgaris)).